The chain runs to 575 residues: Glutathione/L-cysteine transport system ATP-binding/permease protein CydD (575 aa).

6 helical membrane-spanning segments follow: residues 17-37 (LFVL…FLMF), 53-73 (ILLI…RSVS), 135-155 (IFPA…LGFF), 161-181 (ILLA…SLLV), 246-266 (FAAQ…TAGQ), and 275-295 (TMIA…LPLS). The ABC transmembrane type-1 domain maps to 19–303 (VLVIFLGAVT…LSDALGEVPG (285 aa)). The ABC transporter domain maps to 337 to 570 (LAFRDVTFSY…NERYRRLYHL (234 aa)). ATP is bound at residue 370-377 (GRSGSGKS).

Belongs to the ABC transporter superfamily. Cysteine exporter (TC 3.A.1.129.1) family. In terms of assembly, forms a heterodimer with CydC.

Its subcellular location is the cell membrane. It catalyses the reaction L-cysteine(in) + ATP + H2O = L-cysteine(out) + ADP + phosphate + H(+). It carries out the reaction glutathione(in) + ATP + H2O = glutathione(out) + ADP + phosphate + H(+). Part of the ABC transporter complex CydDC that exports the reduced low-molecular-weight thiols cysteine and glutathione from the cell. Export of these thiol-containing redox-active molecules may be crucial for redox homeostasis, permitting correct assembly of various respiratory complexes and formation of correct disulfide bonds in secreted proteins. CydD contains transmembrane domains (TMD), which form a pore in the membrane, and an ATP-binding domain (NBD), which is responsible for energy generation. The sequence is that of Glutathione/L-cysteine transport system ATP-binding/permease protein CydD (cydD) from Bacillus subtilis (strain 168).